The primary structure comprises 446 residues: Exopolygalacturonase (446 aa).

The first 17 residues, 1–17 (MRVTDIISCALLQASIA), serve as a signal peptide directing secretion. Asn53, Asn118, Asn134, and Asn204 each carry an N-linked (GlcNAc...) asparagine glycan. The PbH1 1 repeat unit spans residues 236 to 257 (SDNIIIQNSNINNGDDCVSFKP). Residue Asp250 is the Proton donor of the active site. Cys252 and Cys269 are oxidised to a cystine. N-linked (GlcNAc...) asparagine glycosylation is found at Asn258 and Asn270. 3 PbH1 repeats span residues 259-279 (STNI…SVGS), 290-311 (VENI…RIKV), and 332-353 (VRNV…EITQ). The active site involves His273. Asn297, Asn302, Asn334, Asn359, and Asn369 each carry an N-linked (GlcNAc...) asparagine glycan. PbH1 repeat units lie at residues 367–398 (PSNL…VVCS) and 403–434 (CSDI…QSQV). Cystine bridges form between Cys397/Cys403 and Cys424/Cys436. An N-linked (GlcNAc...) asparagine glycan is attached at Asn435.

This sequence belongs to the glycosyl hydrolase 28 family.

It localises to the secreted. It carries out the reaction [(1-&gt;4)-alpha-D-galacturonosyl](n) + H2O = alpha-D-galacturonate + [(1-&gt;4)-alpha-D-galacturonosyl](n-1). Hydrolysis of 1,4-alpha-D-galactosiduronic linkages in pectate and other galacturonans. The chain is Exopolygalacturonase (PGX1) from Cochliobolus carbonum (Maize leaf spot fungus).